A 242-amino-acid polypeptide reads, in one-letter code: 6-carboxyhexanoate--CoA ligase (242 aa).

It belongs to the BioW family. In terms of assembly, homodimer. Requires Mg(2+) as cofactor.

The catalysed reaction is heptanedioate + ATP + CoA = 6-carboxyhexanoyl-CoA + AMP + diphosphate. It participates in metabolic intermediate metabolism; pimeloyl-CoA biosynthesis; pimeloyl-CoA from pimelate: step 1/1. Functionally, catalyzes the transformation of pimelate into pimeloyl-CoA with concomitant hydrolysis of ATP to AMP. The polypeptide is 6-carboxyhexanoate--CoA ligase (Veillonella parvula (strain ATCC 10790 / DSM 2008 / CCUG 5123 / JCM 12972 / NCTC 11810 / Te3) (Veillonella alcalescens)).